The chain runs to 309 residues: Homoserine kinase (309 aa).

Residue 91 to 101 (PIGSGLGSSAC) coordinates ATP.

The protein belongs to the GHMP kinase family. Homoserine kinase subfamily.

Its subcellular location is the cytoplasm. It catalyses the reaction L-homoserine + ATP = O-phospho-L-homoserine + ADP + H(+). It participates in amino-acid biosynthesis; L-threonine biosynthesis; L-threonine from L-aspartate: step 4/5. Functionally, catalyzes the ATP-dependent phosphorylation of L-homoserine to L-homoserine phosphate. The sequence is that of Homoserine kinase from Buchnera aphidicola subsp. Schizaphis graminum (strain Sg).